The sequence spans 417 residues: Exodeoxyribonuclease 7 large subunit (417 aa).

It belongs to the XseA family. Heterooligomer composed of large and small subunits.

Its subcellular location is the cytoplasm. The enzyme catalyses Exonucleolytic cleavage in either 5'- to 3'- or 3'- to 5'-direction to yield nucleoside 5'-phosphates.. Functionally, bidirectionally degrades single-stranded DNA into large acid-insoluble oligonucleotides, which are then degraded further into small acid-soluble oligonucleotides. The sequence is that of Exodeoxyribonuclease 7 large subunit from Lactococcus lactis subsp. cremoris (strain MG1363).